Here is a 609-residue protein sequence, read N- to C-terminus: Aminopeptidase ltah-1.1 (609 aa).

Substrate-binding positions include 137-139 (QCQ) and 268-273 (PFGGME). A Zn(2+)-binding site is contributed by H297. The Proton acceptor role is filled by E298. 2 residues coordinate Zn(2+): H301 and E320. Catalysis depends on Y387, which acts as the Proton donor. Position 564 to 566 (564 to 566 (RMK)) interacts with substrate.

It belongs to the peptidase M1 family. It depends on Zn(2+) as a cofactor.

It is found in the cytoplasm. The catalysed reaction is Release of N-terminal Arg and Lys from oligopeptides when P1' is not Pro. Also acts on arylamides of Arg and Lys.. In terms of biological role, aminopeptidase which preferentially removes N-terminal Arg and Lys residues from peptides and proteins. This is Aminopeptidase ltah-1.1 from Caenorhabditis elegans.